Here is a 173-residue protein sequence, read N- to C-terminus: Zinc finger matrin-type protein 5 (173 aa).

Residues 51 to 79 (ERSKEVCRKFVQTGQCVFGTSCRFSHMSE) form a C3H1-type zinc finger. The disordered stretch occupies residues 83 to 111 (KMLEQKIDDEKRQKEDPDQDGSSERSVDE).

In terms of assembly, component of the U11/U12 snRNPs that are part of the U12-type spliceosome.

It localises to the nucleus. This is Zinc finger matrin-type protein 5 (zmat5) from Danio rerio (Zebrafish).